The following is a 273-amino-acid chain: Large ribosomal subunit protein uL2 (273 aa).

Disordered stretches follow at residues 28 to 53 (KPFA…TTRH) and 221 to 273 (RGTA…RRSK). Residues 39–48 (KSGGRNNNGR) show a composition bias toward low complexity.

The protein belongs to the universal ribosomal protein uL2 family. In terms of assembly, part of the 50S ribosomal subunit. Forms a bridge to the 30S subunit in the 70S ribosome.

Its function is as follows. One of the primary rRNA binding proteins. Required for association of the 30S and 50S subunits to form the 70S ribosome, for tRNA binding and peptide bond formation. It has been suggested to have peptidyltransferase activity; this is somewhat controversial. Makes several contacts with the 16S rRNA in the 70S ribosome. This is Large ribosomal subunit protein uL2 from Klebsiella pneumoniae (strain 342).